A 179-amino-acid chain; its full sequence is ATP synthase subunit delta, chloroplastic (179 aa).

Belongs to the ATPase delta chain family. As to quaternary structure, F-type ATPases have 2 components, F(1) - the catalytic core - and F(0) - the membrane proton channel. F(1) has five subunits: alpha(3), beta(3), gamma(1), delta(1), epsilon(1). CF(0) has four main subunits: a(1), b(1), b'(1) and c(10-14). The alpha and beta chains form an alternating ring which encloses part of the gamma chain. F(1) is attached to F(0) by a central stalk formed by the gamma and epsilon chains, while a peripheral stalk is formed by the delta, b and b' chains.

The protein resides in the plastid. It is found in the chloroplast thylakoid membrane. In terms of biological role, f(1)F(0) ATP synthase produces ATP from ADP in the presence of a proton or sodium gradient. F-type ATPases consist of two structural domains, F(1) containing the extramembraneous catalytic core and F(0) containing the membrane proton channel, linked together by a central stalk and a peripheral stalk. During catalysis, ATP synthesis in the catalytic domain of F(1) is coupled via a rotary mechanism of the central stalk subunits to proton translocation. Its function is as follows. This protein is part of the stalk that links CF(0) to CF(1). It either transmits conformational changes from CF(0) to CF(1) or is implicated in proton conduction. The sequence is that of ATP synthase subunit delta, chloroplastic from Ochrosphaera neapolitana.